The primary structure comprises 309 residues: Protein FdhE (309 aa).

It belongs to the FdhE family.

It localises to the cytoplasm. Its function is as follows. Necessary for formate dehydrogenase activity. This is Protein FdhE from Salmonella choleraesuis (strain SC-B67).